The following is a 494-amino-acid chain: Alpha-amylase-related protein (494 aa).

An N-terminal signal peptide occupies residues 1–20; it reads MFKFALALTLCLAGASLSLA. Gln21 is modified (pyrrolidone carboxylic acid). Cys48 and Cys104 form a disulfide bridge. Asn118, Gln169, and Asp178 together coordinate Ca(2+). Cys157 and Cys171 are joined by a disulfide. A chloride-binding site is contributed by Arg206. Catalysis depends on Asp208, which acts as the Nucleophile. Residue His212 participates in Ca(2+) binding. Glu245 functions as the Proton donor in the catalytic mechanism. Chloride contacts are provided by Asn308 and Arg343. 3 disulfides stabilise this stretch: Cys376-Cys382, Cys418-Cys441, and Cys448-Cys460.

This sequence belongs to the glycosyl hydrolase 13 family. Monomer. It depends on Ca(2+) as a cofactor. Chloride is required as a cofactor.

It is found in the secreted. The catalysed reaction is Endohydrolysis of (1-&gt;4)-alpha-D-glucosidic linkages in polysaccharides containing three or more (1-&gt;4)-alpha-linked D-glucose units.. This is Alpha-amylase-related protein (Amyrel) from Drosophila punjabiensis (Fruit fly).